A 152-amino-acid chain; its full sequence is Large ribosomal subunit protein uL11 (152 aa).

It belongs to the universal ribosomal protein uL11 family. As to quaternary structure, part of the ribosomal stalk of the 50S ribosomal subunit. Interacts with L10 and the large rRNA to form the base of the stalk. L10 forms an elongated spine to which L12 dimers bind in a sequential fashion forming a multimeric L10(L12)X complex. In terms of processing, one or more lysine residues are methylated.

Its function is as follows. Forms part of the ribosomal stalk which helps the ribosome interact with GTP-bound translation factors. The sequence is that of Large ribosomal subunit protein uL11 from Mycoplasmoides gallisepticum (strain R(low / passage 15 / clone 2)) (Mycoplasma gallisepticum).